The sequence spans 116 residues: Large ribosomal subunit protein bL17 (116 aa).

It belongs to the bacterial ribosomal protein bL17 family. Part of the 50S ribosomal subunit. Contacts protein L32.

In Cyanothece sp. (strain PCC 7425 / ATCC 29141), this protein is Large ribosomal subunit protein bL17.